A 396-amino-acid polypeptide reads, in one-letter code: Pre-mRNA-splicing regulator WTAP (396 aa).

Position 1 is an N-acetylmethionine (methionine 1). Residue serine 14 is modified to Phosphoserine. Low complexity-rich tracts occupy residues 240 to 257 (QQQQSQASAPSTSRTTAS), 278 to 291 (SNGSSSRQRTSGSG), and 304 to 316 (PSSPGNGNKSSNS). Residues 240–396 (QQQQSQASAP…SSVNVQGSVL (157 aa)) are disordered. Residues serine 305, serine 306, and serine 341 each carry the phosphoserine modification. A compositionally biased stretch (polar residues) spans 340–356 (DSPTGSENSLTHQSNDT). Phosphothreonine is present on threonine 350. Residues 357-368 (DSSHDPQEEKAV) show a composition bias toward basic and acidic residues. The span at 380-396 (HVQNGLDSSVNVQGSVL) shows a compositional bias: polar residues. Serine 388 carries the post-translational modification Phosphoserine.

The protein belongs to the fl(2)d family. In terms of assembly, component of the WMM complex, a N6-methyltransferase complex composed of a catalytic subcomplex, named MAC, and of an associated subcomplex, named MACOM. The MAC subcomplex is composed of METTL3 and METTL14. The MACOM subcomplex is composed of WTAP, ZC3H13, CBLL1/HAKAI, VIRMA, and, in some cases of RBM15 (RBM15 or RBM15B). Interacts with WT1. Also a component of a MACOM-like complex, named WTAP complex, composed of WTAP, ZC3H13, CBLL1, VIRMA, RBM15, BCLAF1 and THRAP3. Ubiquitously expressed.

It localises to the nucleus speckle. The protein localises to the nucleus. The protein resides in the nucleoplasm. Its subcellular location is the cytoplasm. Associated component of the WMM complex, a complex that mediates N6-methyladenosine (m6A) methylation of RNAs, a modification that plays a role in the efficiency of mRNA splicing and RNA processing. Required for accumulation of METTL3 and METTL14 to nuclear speckle. Acts as a mRNA splicing regulator. Regulates G2/M cell-cycle transition by binding to the 3' UTR of CCNA2, which enhances its stability. Impairs WT1 DNA-binding ability and inhibits expression of WT1 target genes. The polypeptide is Pre-mRNA-splicing regulator WTAP (Homo sapiens (Human)).